The primary structure comprises 229 residues: Uracil-DNA glycosylase (229 aa).

Aspartate 71 serves as the catalytic Proton acceptor.

The protein belongs to the uracil-DNA glycosylase (UDG) superfamily. UNG family.

Its subcellular location is the cytoplasm. The enzyme catalyses Hydrolyzes single-stranded DNA or mismatched double-stranded DNA and polynucleotides, releasing free uracil.. Functionally, excises uracil residues from the DNA which can arise as a result of misincorporation of dUMP residues by DNA polymerase or due to deamination of cytosine. In Campylobacter lari (strain RM2100 / D67 / ATCC BAA-1060), this protein is Uracil-DNA glycosylase.